Here is a 214-residue protein sequence, read N- to C-terminus: ATP phosphoribosyltransferase (214 aa).

This sequence belongs to the ATP phosphoribosyltransferase family. Short subfamily. Heteromultimer composed of HisG and HisZ subunits.

The protein localises to the cytoplasm. It catalyses the reaction 1-(5-phospho-beta-D-ribosyl)-ATP + diphosphate = 5-phospho-alpha-D-ribose 1-diphosphate + ATP. The protein operates within amino-acid biosynthesis; L-histidine biosynthesis; L-histidine from 5-phospho-alpha-D-ribose 1-diphosphate: step 1/9. In terms of biological role, catalyzes the condensation of ATP and 5-phosphoribose 1-diphosphate to form N'-(5'-phosphoribosyl)-ATP (PR-ATP). Has a crucial role in the pathway because the rate of histidine biosynthesis seems to be controlled primarily by regulation of HisG enzymatic activity. The polypeptide is ATP phosphoribosyltransferase (Streptococcus gordonii (strain Challis / ATCC 35105 / BCRC 15272 / CH1 / DL1 / V288)).